Here is a 522-residue protein sequence, read N- to C-terminus: Major facilitator-type transporter sorT (522 aa).

The segment at 1–21 (MSHTEPKAPVNTGEVENGHLY) is disordered. 12 helical membrane-spanning segments follow: residues 52–72 (WFIAAIATLSVFAVTFTSSAY), 89–109 (VFIVGLSLFVLGFAIGPAVWA), 121–141 (QILWIITHIAMVAFLGGSAGS), 143–163 (NVATLLILRFFAGTFGGSPLV), 183–203 (TIYCVAPFLGPILGPIVGGFV), 211–231 (WVQGVCVIFIGVVGILGIVFI), 280–300 (WIFLFLEPIVLIASVYMAIIY), 324–344 (IGGLAFLGIAVGIIFGLVYAI), 366–386 (LPPAIVGGVALPIGMFAFAWT), 395–415 (VSIILSAPFGFGCVLVILPIM), 427–447 (ASVLAAAAIFRSVVGAVFPLF), and 457–477 (IHWASSIPAFLTLLCMPFPLI).

The protein belongs to the major facilitator superfamily. Sugar transporter (TC 2.A.1.1) family.

It localises to the membrane. In terms of biological role, major facilitator-type transporter; part of the gene cluster that mediates the biosynthesis of sorbicillinoids, a diverse group of yellow secondary metabolites that restrict growth of competing pathogenic fungi but not of bacteria. This is Major facilitator-type transporter sorT from Penicillium rubens (strain ATCC 28089 / DSM 1075 / NRRL 1951 / Wisconsin 54-1255) (Penicillium chrysogenum).